The following is a 281-amino-acid chain: INSIG family protein (281 aa).

At 1–93 (MSRKEIYEPR…FIDYSSLITF (93 aa)) the chain is on the cytoplasmic side. The residue at position 28 (Ser-28) is a Phosphoserine. Residues 94–120 (FCKLCVIFGLGFVFTYLAEQIVQDAKL) form a helical membrane-spanning segment. Topologically, residues 121–134 (PLLTVNLKSWKFEP) are lumenal. The chain crosses the membrane as a helical span at residues 135 to 159 (PWPAIFGFVAVILGLSYRRMDTKYP). At 160–170 (LGAAPLRPSQS) the chain is on the cytoplasmic side. Residues 171–186 (SKWQWISRYLAAFATL) traverse the membrane as a helical segment. At 187–189 (LLS) the chain is on the lumenal side. A helical transmembrane segment spans residues 190-215 (MKKLLFISNSHSIVALVASSASIWYI). The Cytoplasmic portion of the chain corresponds to 216–221 (FDRSRN). Residues 222–256 (GIILSTITSVLGSILYYNLVDTSKIELNGVEFPEI) form a helical membrane-spanning segment. The Lumenal segment spans residues 257-260 (QFRL). Residues 261 to 281 (WIPMILFSASTIVGNAGRLLF) traverse the membrane as a helical segment.

This sequence belongs to the INSIG family.

The protein localises to the endoplasmic reticulum membrane. The polypeptide is INSIG family protein (ins1) (Schizosaccharomyces pombe (strain 972 / ATCC 24843) (Fission yeast)).